Here is a 577-residue protein sequence, read N- to C-terminus: Hemagglutinin-neuraminidase (577 aa).

Over 1 to 26 the chain is Intravirion; that stretch reads MDRAVSQVALENDEREAKNTWRLIFR. Residues 27 to 47 form a helical membrane-spanning segment; that stretch reads IAILLLTVVTLATSVASLVYS. Residues 48-577 are Virion surface-facing; it reads MGASTPSDLV…NDGVREARSG (530 aa). An N-linked (GlcNAc...) asparagine; by host glycan is attached at asparagine 119. Residues 124-152 are important for interaction with fusion/F protein; the sequence is GAPIHDPDFIGGIGKELIVDDASDVTSFY. Intrachain disulfides connect cysteine 172–cysteine 196, cysteine 186–cysteine 247, and cysteine 238–cysteine 251. Residues 234 to 239 form an involved in neuraminidase activity region; the sequence is NRKSCS. Asparagine 341 and asparagine 433 each carry an N-linked (GlcNAc...) asparagine; by host glycan. Disulfide bonds link cysteine 344–cysteine 461 and cysteine 455–cysteine 465. N-linked (GlcNAc...) asparagine; by host glycans are attached at residues asparagine 481 and asparagine 538. A disulfide bond links cysteine 531 and cysteine 542.

This sequence belongs to the paramyxoviruses hemagglutinin-neuraminidase family. As to quaternary structure, homotetramer; composed of disulfide-linked homodimers. Interacts with F protein trimer. Interacts with host CG-1B; this interaction inhibits viral adsorption and replication rather than internalization.

The protein resides in the virion membrane. Its subcellular location is the host cell membrane. It carries out the reaction Hydrolysis of alpha-(2-&gt;3)-, alpha-(2-&gt;6)-, alpha-(2-&gt;8)- glycosidic linkages of terminal sialic acid residues in oligosaccharides, glycoproteins, glycolipids, colominic acid and synthetic substrates.. In terms of biological role, mediates the viral entry into the host cell together with fusion/F protein. Attaches the virus to sialic acid-containing cell receptors and thereby initiates infection. Binding of HN protein to the receptor induces a conformational change that allows the F protein to trigger virion/cell membranes fusion. Its function is as follows. Neuraminidase activity ensures the efficient spread of the virus by dissociating the mature virions from the neuraminic acid containing glycoproteins. The protein is Hemagglutinin-neuraminidase (HN) of Gallus gallus (Chicken).